The chain runs to 1081 residues: Serine/threonine-protein kinase PKH2 (1081 aa).

Residue serine 138 is modified to Phosphoserine. The Protein kinase domain maps to 179-443 (FKFGSVIGDG…ISQIKEHHFF (265 aa)). ATP contacts are provided by residues 189–191 (AYS) and lysine 208. The PIF-pocket stretch occupies residues 210–255 (LNKEYLIRQKKVKYVSIEKTALQKLNNSPSVVRLFSTFQDESSLYF). ATP is bound by residues 258 to 260 (EYA) and aspartate 264. Aspartate 303 serves as the catalytic Proton acceptor. Residues glutamate 307 and aspartate 321 each contribute to the ATP site. Residues 494–526 (HLVTQRSASSPSVEETTHSTLYNNNTHASTESE) are compositionally biased toward polar residues. Disordered stretches follow at residues 494–652 (HLVT…TYQM), 805–833 (NRSG…NKGS), and 970–1017 (IERR…INSA). The segment covering 527 to 538 (ISIKKRPTDERT) has biased composition (basic and acidic residues). Composition is skewed to low complexity over residues 564–575 (AASAALAASAAL) and 582–602 (SYPT…TSRP). At serine 619 the chain carries Phosphoserine. The span at 632–645 (PMPPYTPPMSPPMT) shows a compositional bias: pro residues. 2 stretches are compositionally biased toward polar residues: residues 805–819 (NRSG…NSSP) and 998–1017 (HSQS…INSA). Serine 1009 carries the phosphoserine modification.

It belongs to the protein kinase superfamily. AGC Ser/Thr protein kinase family. PDPK1 subfamily.

It is found in the nucleus. It localises to the cytoplasm. Its subcellular location is the cell cortex. The enzyme catalyses L-seryl-[protein] + ATP = O-phospho-L-seryl-[protein] + ADP + H(+). It carries out the reaction L-threonyl-[protein] + ATP = O-phospho-L-threonyl-[protein] + ADP + H(+). With respect to regulation, sphingoid base activates kinase activity. Functionally, serine/threonine-protein kinase which is part sphingolipid-mediated signaling pathway that is required for the internalization step of endocytosis by regulating eisosome assembly and organization, and modulating the organization of the plasma membrane. Phosphorylates and activates PKC1. Activates YPK1 and YPK2, 2 components of signaling cascade required for maintenance of cell wall integrity. Required for stress-induced P-body assembly and regulates global mRNA decay at the deadenylation step. The sequence is that of Serine/threonine-protein kinase PKH2 (PKH2) from Saccharomyces cerevisiae (strain ATCC 204508 / S288c) (Baker's yeast).